Reading from the N-terminus, the 162-residue chain is 2-C-methyl-D-erythritol 2,4-cyclodiphosphate synthase (162 aa).

A divalent metal cation is bound by residues aspartate 12 and histidine 14. Residues 12 to 14 (DVH) and 38 to 39 (HS) each bind 4-CDP-2-C-methyl-D-erythritol 2-phosphate. Histidine 46 is a binding site for a divalent metal cation. 4-CDP-2-C-methyl-D-erythritol 2-phosphate contacts are provided by residues 60-62 (DIG), 65-69 (FPDTD), phenylalanine 143, and arginine 146.

This sequence belongs to the IspF family. In terms of assembly, homotrimer. A divalent metal cation is required as a cofactor.

It catalyses the reaction 4-CDP-2-C-methyl-D-erythritol 2-phosphate = 2-C-methyl-D-erythritol 2,4-cyclic diphosphate + CMP. It functions in the pathway isoprenoid biosynthesis; isopentenyl diphosphate biosynthesis via DXP pathway; isopentenyl diphosphate from 1-deoxy-D-xylulose 5-phosphate: step 4/6. Functionally, involved in the biosynthesis of isopentenyl diphosphate (IPP) and dimethylallyl diphosphate (DMAPP), two major building blocks of isoprenoid compounds. Catalyzes the conversion of 4-diphosphocytidyl-2-C-methyl-D-erythritol 2-phosphate (CDP-ME2P) to 2-C-methyl-D-erythritol 2,4-cyclodiphosphate (ME-CPP) with a corresponding release of cytidine 5-monophosphate (CMP). The chain is 2-C-methyl-D-erythritol 2,4-cyclodiphosphate synthase from Azoarcus sp. (strain BH72).